We begin with the raw amino-acid sequence, 950 residues long: Protein translocase subunit SecA 1 (950 aa).

Residues Gln83, 101–105, and Asp490 contribute to the ATP site; that span reads GEGKT. Positions 864 to 950 are disordered; it reads EGGAGRKNAA…AKPPKSVKKR (87 aa). Residues 873-888 show a composition bias toward basic and acidic residues; the sequence is AAREEAPSRLRAKGIE.

It belongs to the SecA family. Monomer and homodimer. Part of the essential Sec protein translocation apparatus which comprises SecA, SecYEG and auxiliary proteins SecDF. Other proteins may also be involved.

The protein localises to the cell membrane. The protein resides in the cytoplasm. It catalyses the reaction ATP + H2O + cellular proteinSide 1 = ADP + phosphate + cellular proteinSide 2.. Part of the Sec protein translocase complex. Interacts with the SecYEG preprotein conducting channel. Has a central role in coupling the hydrolysis of ATP to the transfer of proteins into and across the cell membrane, serving as an ATP-driven molecular motor driving the stepwise translocation of polypeptide chains across the membrane. The chain is Protein translocase subunit SecA 1 from Mycobacterium ulcerans (strain Agy99).